The sequence spans 297 residues: uncharacterized protein (297 aa).

This is an uncharacterized protein from Escherichia coli O157:H7.